Reading from the N-terminus, the 121-residue chain is uncharacterized protein (121 aa).

This is an uncharacterized protein from Escherichia coli (strain K12).